An 822-amino-acid chain; its full sequence is IQ and AAA domain-containing protein 1-like (822 aa).

The region spanning 206-235 (QDQGAIVIQKVWKGYLQRKRIEQDRRMEME) is the IQ domain. Residues 338-363 (RQELEAQAQENKKKEQEKNKDKVKEK) are compositionally biased toward basic and acidic residues. Disordered regions lie at residues 338-378 (RQEL…KAKK) and 457-484 (REET…KDLT). Basic residues predominate over residues 464–479 (KSPKKKGGKKSGKKKK). 569-576 (GPSGMGKK) is a binding site for ATP.

It belongs to the AAA ATPase family.

In Rattus norvegicus (Rat), this protein is IQ and AAA domain-containing protein 1-like (Iqca1l).